A 512-amino-acid polypeptide reads, in one-letter code: GMP synthase [glutamine-hydrolyzing] (512 aa).

Positions 3–196 (NILILDFGSQ…VKHICQTSET (194 aa)) constitute a Glutamine amidotransferase type-1 domain. Residue C80 is the Nucleophile of the active site. Active-site residues include H169 and E171. One can recognise a GMPS ATP-PPase domain in the interval 197–387 (WKIETIEKQL…LGLPDVLISR (191 aa)). 225–231 (SGGVDSS) contributes to the ATP binding site.

In terms of assembly, homodimer.

The catalysed reaction is XMP + L-glutamine + ATP + H2O = GMP + L-glutamate + AMP + diphosphate + 2 H(+). It participates in purine metabolism; GMP biosynthesis; GMP from XMP (L-Gln route): step 1/1. Catalyzes the synthesis of GMP from XMP. This Chlamydia muridarum (strain MoPn / Nigg) protein is GMP synthase [glutamine-hydrolyzing] (guaA).